Consider the following 216-residue polypeptide: RNA pyrophosphohydrolase (216 aa).

One can recognise a Nudix hydrolase domain in the interval 6-149; the sequence is GFRPNVGIIL…KRDVYQLALT (144 aa). The short motif at 38–59 is the Nudix box element; that stretch reads GGIKYGETPMQAMYRELHEETG. Residues 159–188 form a disordered region; it reads AQRTDKSRGPRAPRYPRVANGHAASEAPAA.

The protein belongs to the Nudix hydrolase family. RppH subfamily. The cofactor is a divalent metal cation.

Its function is as follows. Accelerates the degradation of transcripts by removing pyrophosphate from the 5'-end of triphosphorylated RNA, leading to a more labile monophosphorylated state that can stimulate subsequent ribonuclease cleavage. The chain is RNA pyrophosphohydrolase from Burkholderia mallei (strain NCTC 10247).